Here is a 211-residue protein sequence, read N- to C-terminus: Large ribosomal subunit protein eL13 (211 aa).

Lysine 16 is subject to N6-acetyllysine. A phosphoserine mark is found at serine 52, serine 77, and serine 106. Glycyl lysine isopeptide (Lys-Gly) (interchain with G-Cter in SUMO2) cross-links involve residues lysine 123 and lysine 145. Residue lysine 174 forms a Glycyl lysine isopeptide (Lys-Gly) (interchain with G-Cter in SUMO1); alternate linkage. Residues lysine 174 and lysine 177 each participate in a glycyl lysine isopeptide (Lys-Gly) (interchain with G-Cter in SUMO2); alternate cross-link. Position 177 is an N6-acetyllysine; alternate (lysine 177).

Belongs to the eukaryotic ribosomal protein eL13 family. Component of the 60S large ribosomal subunit (LSU). Higher levels of expression in benign breast lesions than in carcinomas.

It localises to the cytoplasm. Its function is as follows. Component of the ribosome, a large ribonucleoprotein complex responsible for the synthesis of proteins in the cell. The small ribosomal subunit (SSU) binds messenger RNAs (mRNAs) and translates the encoded message by selecting cognate aminoacyl-transfer RNA (tRNA) molecules. The large subunit (LSU) contains the ribosomal catalytic site termed the peptidyl transferase center (PTC), which catalyzes the formation of peptide bonds, thereby polymerizing the amino acids delivered by tRNAs into a polypeptide chain. The nascent polypeptides leave the ribosome through a tunnel in the LSU and interact with protein factors that function in enzymatic processing, targeting, and the membrane insertion of nascent chains at the exit of the ribosomal tunnel. As part of the LSU, it is probably required for its formation and the maturation of rRNAs. Plays a role in bone development. This is Large ribosomal subunit protein eL13 (RPL13) from Homo sapiens (Human).